We begin with the raw amino-acid sequence, 300 residues long: Lysenin-related protein 2 (300 aa).

Residues Glu12–Ser35 form an N-terminal cap domain region. The interval Val36 to Ile109 is beta-hairpin domain. The tract at residues Pro110–Leu158 is N-terminal cap domain. The interval Val159–Lys299 is C-terminal receptor-binding domain. Residues Lys187, Ser229, Tyr235, and Tyr284 each coordinate an N-(acyl)-sphingosylphosphocholine. The cysteines at positions 274 and 285 are disulfide-linked.

The protein belongs to the lysenin family. Binds to sphingomyelin as a monomer by using its C-terminal domain. Forms a nonamer when sphingomyelin/LRP-2 ratio is lower than ca 500. Oligomerization, but not binding, is influenced by the fluidity of sphingomyelin. In terms of tissue distribution, expressed by coelomocytes.

It localises to the secreted. It is found in the target cell membrane. In terms of biological role, pore-forming toxin that specifically binds sphingomyelin in the plasma membrane of various cells. Has hemolytic activity. It also has antibacterial activities against B.megaterium. The protein is Lysenin-related protein 2 of Eisenia fetida (Red wiggler worm).